An 823-amino-acid polypeptide reads, in one-letter code: Valine--tRNA ligase (823 aa).

Positions 52 to 62 (PTVSGVLHMGH) match the 'HIGH' region motif. Residues 549 to 553 (KMSKS) carry the 'KMSKS' region motif. Residue lysine 552 participates in ATP binding.

This sequence belongs to the class-I aminoacyl-tRNA synthetase family. ValS type 2 subfamily. In terms of assembly, monomer.

It localises to the cytoplasm. It catalyses the reaction tRNA(Val) + L-valine + ATP = L-valyl-tRNA(Val) + AMP + diphosphate. Functionally, catalyzes the attachment of valine to tRNA(Val). As ValRS can inadvertently accommodate and process structurally similar amino acids such as threonine, to avoid such errors, it has a 'posttransfer' editing activity that hydrolyzes mischarged Thr-tRNA(Val) in a tRNA-dependent manner. This chain is Valine--tRNA ligase, found in Anaplasma marginale (strain St. Maries).